Here is a 256-residue protein sequence, read N- to C-terminus: MLSRVVLSAAAAAAPSLKNAALLGPGVLQATRIFHTGQPSLAPVPPLPEHGGKVRFGLIPEEFFQFLYPKTGVTGPYVLGTGLILYLLSKEIYVITPETFSAISTIGFLVYIVKKYGASVGEFADKLNEQKIAQLEEVKQASIKQIQDAIDMEKSQQALVQKRHYLFDVQRNNIAMALEVTYRERLHRVYREVKNRLDYHISVQNMMRQKEQEHMINWVEKRVVQSISAQQEKETIAKCIADLKLLSKKAQAQPVM.

The N-terminal 42 residues, Met1–Ala42, are a transit peptide targeting the mitochondrion. Lys131 is modified (N6-succinyllysine). Residues Lys139, Lys154, Lys162, Lys221, Lys233, and Lys244 each carry the N6-acetyllysine modification.

It belongs to the eukaryotic ATPase B chain family. Component of the ATP synthase complex composed at least of ATP5F1A/subunit alpha, ATP5F1B/subunit beta, ATP5MC1/subunit c (homooctomer), MT-ATP6/subunit a, MT-ATP8/subunit 8, ATP5ME/subunit e, ATP5MF/subunit f, ATP5MG/subunit g, ATP5MK/subunit k, ATP5MJ/subunit j, ATP5F1C/subunit gamma, ATP5F1D/subunit delta, ATP5F1E/subunit epsilon, ATP5PF/subunit F6, ATP5PB/subunit b, ATP5PD/subunit d, ATP5PO/subunit OSCP. ATP synthase complex consists of a soluble F(1) head domain (subunits alpha(3) and beta(3)) - the catalytic core - and a membrane F(0) domain - the membrane proton channel (subunits c, a, 8, e, f, g, k and j). These two domains are linked by a central stalk (subunits gamma, delta, and epsilon) rotating inside the F1 region and a stationary peripheral stalk (subunits F6, b, d, and OSCP).

Its subcellular location is the mitochondrion. It is found in the mitochondrion inner membrane. Its function is as follows. Subunit b, of the mitochondrial membrane ATP synthase complex (F(1)F(0) ATP synthase or Complex V) that produces ATP from ADP in the presence of a proton gradient across the membrane which is generated by electron transport complexes of the respiratory chain. ATP synthase complex consist of a soluble F(1) head domain - the catalytic core - and a membrane F(1) domain - the membrane proton channel. These two domains are linked by a central stalk rotating inside the F(1) region and a stationary peripheral stalk. During catalysis, ATP synthesis in the catalytic domain of F(1) is coupled via a rotary mechanism of the central stalk subunits to proton translocation. In vivo, can only synthesize ATP although its ATP hydrolase activity can be activated artificially in vitro. Part of the complex F(0) domain. Part of the complex F(0) domain and the peripheric stalk, which acts as a stator to hold the catalytic alpha(3)beta(3) subcomplex and subunit a/ATP6 static relative to the rotary elements. The polypeptide is ATP synthase peripheral stalk subunit b, mitochondrial (Bos taurus (Bovine)).